Consider the following 345-residue polypeptide: N-acetyl-gamma-glutamyl-phosphate reductase (345 aa).

Cysteine 149 is a catalytic residue.

It belongs to the NAGSA dehydrogenase family. Type 1 subfamily.

It localises to the cytoplasm. The enzyme catalyses N-acetyl-L-glutamate 5-semialdehyde + phosphate + NADP(+) = N-acetyl-L-glutamyl 5-phosphate + NADPH + H(+). Its pathway is amino-acid biosynthesis; L-arginine biosynthesis; N(2)-acetyl-L-ornithine from L-glutamate: step 3/4. Functionally, catalyzes the NADPH-dependent reduction of N-acetyl-5-glutamyl phosphate to yield N-acetyl-L-glutamate 5-semialdehyde. In Halalkalibacterium halodurans (strain ATCC BAA-125 / DSM 18197 / FERM 7344 / JCM 9153 / C-125) (Bacillus halodurans), this protein is N-acetyl-gamma-glutamyl-phosphate reductase.